The chain runs to 55 residues: Seripauperin-7 (55 aa).

Residues 1 to 20 form the signal peptide; sequence MVKLTSIAAGVAAIAAGASA.

This sequence belongs to the SRP1/TIP1 family. Seripauperin subfamily.

The chain is Seripauperin-7 (PAU7) from Saccharomyces cerevisiae (strain ATCC 204508 / S288c) (Baker's yeast).